The primary structure comprises 105 residues: Phosphoribosyl-ATP pyrophosphatase (105 aa).

Belongs to the PRA-PH family.

Its subcellular location is the cytoplasm. It carries out the reaction 1-(5-phospho-beta-D-ribosyl)-ATP + H2O = 1-(5-phospho-beta-D-ribosyl)-5'-AMP + diphosphate + H(+). It participates in amino-acid biosynthesis; L-histidine biosynthesis; L-histidine from 5-phospho-alpha-D-ribose 1-diphosphate: step 2/9. This chain is Phosphoribosyl-ATP pyrophosphatase, found in Methylococcus capsulatus (strain ATCC 33009 / NCIMB 11132 / Bath).